The chain runs to 640 residues: Serine/threonine-protein phosphatase with EF-hands 1 (640 aa).

Positions 16–45 constitute an IQ domain; that stretch reads VVRAALIIQNWYRRYRARLSARQHYALAIF. Residues 122–445 are catalytic; it reads INLLLQAFKQ…PQFFQYQVTS (324 aa). Residues Asp173, His175, Asp202, and Asn234 each contribute to the Mn(2+) site. His235 serves as the catalytic Proton donor. The Mn(2+) site is built by His286 and His393. 3 EF-hand domains span residues 473 to 508, 556 to 591, and 596 to 631; these read ARKT…ILGL, RYRS…FNAH, and IDDS…VHKY. Asp569, Asp571, Ser573, Glu580, Asp609, Asn611, Asp613, Asn615, and Glu620 together coordinate Ca(2+).

Belongs to the PPP phosphatase family. It depends on Mn(2+) as a cofactor. Requires Mg(2+) as cofactor.

It catalyses the reaction O-phospho-L-seryl-[protein] + H2O = L-seryl-[protein] + phosphate. The enzyme catalyses O-phospho-L-threonyl-[protein] + H2O = L-threonyl-[protein] + phosphate. With respect to regulation, activated by calcium. In terms of biological role, may have a role in the recovery or adaptation response of photoreceptors. May have a role in development. The protein is Serine/threonine-protein phosphatase with EF-hands 1 (Ppef1) of Rattus norvegicus (Rat).